Consider the following 515-residue polypeptide: 1-pyrroline-5-carboxylate dehydrogenase (515 aa).

Catalysis depends on residues Glu286 and Cys320.

It belongs to the aldehyde dehydrogenase family. RocA subfamily.

The enzyme catalyses L-glutamate 5-semialdehyde + NAD(+) + H2O = L-glutamate + NADH + 2 H(+). It participates in amino-acid degradation; L-proline degradation into L-glutamate; L-glutamate from L-proline: step 2/2. This is 1-pyrroline-5-carboxylate dehydrogenase from Bacillus anthracis (strain A0248).